Here is a 117-residue protein sequence, read N- to C-terminus: Large ribosomal subunit protein bL20c (117 aa).

The protein belongs to the bacterial ribosomal protein bL20 family.

The protein resides in the plastid. It localises to the chloroplast. Binds directly to 23S ribosomal RNA and is necessary for the in vitro assembly process of the 50S ribosomal subunit. It is not involved in the protein synthesizing functions of that subunit. The protein is Large ribosomal subunit protein bL20c of Thalassiosira pseudonana (Marine diatom).